The sequence spans 481 residues: Cysteine--tRNA ligase (481 aa).

Residue cysteine 29 participates in Zn(2+) binding. The short motif at 31–41 is the 'HIGH' region element; it reads PTVYDYSHLGH. Residues cysteine 210, histidine 235, and glutamate 239 each contribute to the Zn(2+) site. The short motif at 272-276 is the 'KMSKS' region element; sequence KMSKS. Lysine 275 is an ATP binding site.

The protein belongs to the class-I aminoacyl-tRNA synthetase family. Monomer. It depends on Zn(2+) as a cofactor.

The protein resides in the cytoplasm. It catalyses the reaction tRNA(Cys) + L-cysteine + ATP = L-cysteinyl-tRNA(Cys) + AMP + diphosphate. This Anaeromyxobacter dehalogenans (strain 2CP-C) protein is Cysteine--tRNA ligase.